The chain runs to 421 residues: Histidine--tRNA ligase (421 aa).

Belongs to the class-II aminoacyl-tRNA synthetase family. Homodimer.

The protein localises to the cytoplasm. It carries out the reaction tRNA(His) + L-histidine + ATP = L-histidyl-tRNA(His) + AMP + diphosphate + H(+). This Solidesulfovibrio magneticus (strain ATCC 700980 / DSM 13731 / RS-1) (Desulfovibrio magneticus) protein is Histidine--tRNA ligase.